Here is a 336-residue protein sequence, read N- to C-terminus: Type II methyltransferase M2.HphI (336 aa).

It belongs to the N(4)/N(6)-methyltransferase family.

The enzyme catalyses a 2'-deoxyadenosine in DNA + S-adenosyl-L-methionine = an N(6)-methyl-2'-deoxyadenosine in DNA + S-adenosyl-L-homocysteine + H(+). In terms of biological role, an alpha subtype methylase that recognizes the double-stranded sequence 5'-GGTGA-3', probably methylates A-5 on the top strand, and protects the DNA from cleavage by the HphI endonuclease. This chain is Type II methyltransferase M2.HphI (hphIBM), found in Haemophilus parahaemolyticus.